A 130-amino-acid polypeptide reads, in one-letter code: Glycine cleavage system H protein (130 aa).

The region spanning 24–106 (TFTVGITDHA…YGDGWLYRIT (83 aa)) is the Lipoyl-binding domain. K65 carries the post-translational modification N6-lipoyllysine.

The protein belongs to the GcvH family. As to quaternary structure, the glycine cleavage system is composed of four proteins: P, T, L and H. It depends on (R)-lipoate as a cofactor.

Functionally, the glycine cleavage system catalyzes the degradation of glycine. The H protein shuttles the methylamine group of glycine from the P protein to the T protein. This Coxiella burnetii (strain CbuK_Q154) (Coxiella burnetii (strain Q154)) protein is Glycine cleavage system H protein.